Reading from the N-terminus, the 257-residue chain is Protein Cmaq_1209 (257 aa).

The protein belongs to the CinA family.

This Caldivirga maquilingensis (strain ATCC 700844 / DSM 13496 / JCM 10307 / IC-167) protein is Protein Cmaq_1209.